We begin with the raw amino-acid sequence, 127 residues long: Modulator protein MzrA (127 aa).

The Cytoplasmic segment spans residues 1–9 (MQLPRVTLR). The chain crosses the membrane as a helical span at residues 10 to 32 (QMTWTTSAIVLLGITLLLWSAFR). The Periplasmic segment spans residues 33-127 (HQESTLAIRA…LLRDTSHRFG (95 aa)).

It belongs to the MzrA family. As to quaternary structure, interacts with EnvZ.

Its subcellular location is the cell inner membrane. In terms of biological role, modulates the activity of the EnvZ/OmpR two-component regulatory system, probably by directly modulating EnvZ enzymatic activity and increasing stability of phosphorylated OmpR. The polypeptide is Modulator protein MzrA (Escherichia fergusonii (strain ATCC 35469 / DSM 13698 / CCUG 18766 / IAM 14443 / JCM 21226 / LMG 7866 / NBRC 102419 / NCTC 12128 / CDC 0568-73)).